The following is a 180-amino-acid chain: Large ribosomal subunit protein uL6 (180 aa).

This sequence belongs to the universal ribosomal protein uL6 family. In terms of assembly, part of the 50S ribosomal subunit.

Functionally, this protein binds to the 23S rRNA, and is important in its secondary structure. It is located near the subunit interface in the base of the L7/L12 stalk, and near the tRNA binding site of the peptidyltransferase center. This Thermodesulfovibrio yellowstonii (strain ATCC 51303 / DSM 11347 / YP87) protein is Large ribosomal subunit protein uL6.